A 308-amino-acid polypeptide reads, in one-letter code: tRNA dimethylallyltransferase (308 aa).

Residue 8-15 participates in ATP binding; it reads GPTGTGKS. 10 to 15 is a substrate binding site; sequence TGTGKS.

Belongs to the IPP transferase family. In terms of assembly, monomer. It depends on Mg(2+) as a cofactor.

The enzyme catalyses adenosine(37) in tRNA + dimethylallyl diphosphate = N(6)-dimethylallyladenosine(37) in tRNA + diphosphate. Catalyzes the transfer of a dimethylallyl group onto the adenine at position 37 in tRNAs that read codons beginning with uridine, leading to the formation of N6-(dimethylallyl)adenosine (i(6)A). The sequence is that of tRNA dimethylallyltransferase from Mycolicibacterium vanbaalenii (strain DSM 7251 / JCM 13017 / BCRC 16820 / KCTC 9966 / NRRL B-24157 / PYR-1) (Mycobacterium vanbaalenii).